The chain runs to 166 residues: Probable chemoreceptor glutamine deamidase CheD (166 aa).

It belongs to the CheD family.

It carries out the reaction L-glutaminyl-[protein] + H2O = L-glutamyl-[protein] + NH4(+). Its function is as follows. Probably deamidates glutamine residues to glutamate on methyl-accepting chemotaxis receptors (MCPs), playing an important role in chemotaxis. The polypeptide is Probable chemoreceptor glutamine deamidase CheD (Oceanobacillus iheyensis (strain DSM 14371 / CIP 107618 / JCM 11309 / KCTC 3954 / HTE831)).